The sequence spans 656 residues: Choline transporter-like protein 3 (656 aa).

A helical transmembrane segment spans residues 37 to 57 (WLVLFFLFWTGLVFIMGYSVV). Asn-141 and Asn-154 each carry an N-linked (GlcNAc...) asparagine glycan. Helical transmembrane passes span 216–236 (DTIL…LFAF), 242–262 (LLIH…CGVL), 288–308 (LAFA…IFTL), 337–357 (LWTC…LLSL), and 381–401 (YMWW…LACQ). N-linked (GlcNAc...) asparagine glycans are attached at residues Asn-506 and Asn-524. A helical transmembrane segment spans residues 537–557 (FVIFLGKVLVVCFSIFGGLMA). Asn-559 is a glycosylation site (N-linked (GlcNAc...) asparagine). A helical transmembrane segment spans residues 566-586 (VWAIPLLLVAFFACVVAHSFL). The disordered stretch occupies residues 634–656 (AKSQGQKDALPNEEGTELQPIVR).

Belongs to the CTL (choline transporter-like) family.

Its subcellular location is the membrane. The polypeptide is Choline transporter-like protein 3 (Slc44a3) (Mus musculus (Mouse)).